Here is a 76-residue protein sequence, read N- to C-terminus: Conotoxin Vc6.3 (76 aa).

Positions 1–22 are cleaved as a signal peptide; that stretch reads MKLTCVMIVAVLFLTANTFATA. A propeptide spanning residues 23-50 is cleaved from the precursor; it reads DDPRNGLRDLFSIAHHEMKNPEASKLNE. Intrachain disulfides connect Cys-52-Cys-66, Cys-59-Cys-70, and Cys-67-Cys-75.

The protein belongs to the conotoxin O1 superfamily. In terms of tissue distribution, expressed by the venom duct.

It localises to the secreted. The polypeptide is Conotoxin Vc6.3 (Conus victoriae (Queen Victoria cone)).